The sequence spans 229 residues: Prolactin (229 aa).

An N-terminal signal peptide occupies residues 1-30; that stretch reads MDSKGSAQKGSRLLLLLVVSNLLLCQGVVS. Cys-34 and Cys-41 form a disulfide bridge. Phosphoserine is present on Ser-56. Asn-61 carries an N-linked (GlcNAc...) asparagine; partial glycan. Residues Ser-64 and Ser-120 each carry the phosphoserine modification. 2 disulfides stabilise this stretch: Cys-88–Cys-204 and Cys-221–Cys-229.

This sequence belongs to the somatotropin/prolactin family. Interacts with PRLR.

It localises to the secreted. Prolactin acts primarily on the mammary gland by promoting lactation, mammogenesis, mitogenesis and osmoregulation. The sequence is that of Prolactin (PRL) from Ovis aries (Sheep).